A 99-amino-acid polypeptide reads, in one-letter code: MSAITRDEVAHLARLARLALPEDELDQLAAQLDVIISAVAKVQEVAKGDIPPTSHALPLTNVYRPDEVKPGLTPDQALAEAPAVEDGRFRVPQILGEEG.

The protein belongs to the GatC family. As to quaternary structure, heterotrimer of A, B and C subunits.

The catalysed reaction is L-glutamyl-tRNA(Gln) + L-glutamine + ATP + H2O = L-glutaminyl-tRNA(Gln) + L-glutamate + ADP + phosphate + H(+). It carries out the reaction L-aspartyl-tRNA(Asn) + L-glutamine + ATP + H2O = L-asparaginyl-tRNA(Asn) + L-glutamate + ADP + phosphate + 2 H(+). Allows the formation of correctly charged Asn-tRNA(Asn) or Gln-tRNA(Gln) through the transamidation of misacylated Asp-tRNA(Asn) or Glu-tRNA(Gln) in organisms which lack either or both of asparaginyl-tRNA or glutaminyl-tRNA synthetases. The reaction takes place in the presence of glutamine and ATP through an activated phospho-Asp-tRNA(Asn) or phospho-Glu-tRNA(Gln). This chain is Aspartyl/glutamyl-tRNA(Asn/Gln) amidotransferase subunit C, found in Thermobifida fusca (strain YX).